An 860-amino-acid chain; its full sequence is Leucine--tRNA ligase (860 aa).

The 'HIGH' region motif lies at 42–52 (PYPSGRLHMGH). The 'KMSKS' region signature appears at 619–623 (KMSKS). Residue Lys622 coordinates ATP.

This sequence belongs to the class-I aminoacyl-tRNA synthetase family.

The protein localises to the cytoplasm. The catalysed reaction is tRNA(Leu) + L-leucine + ATP = L-leucyl-tRNA(Leu) + AMP + diphosphate. In Yersinia pseudotuberculosis serotype I (strain IP32953), this protein is Leucine--tRNA ligase.